A 659-amino-acid chain; its full sequence is Exoribonuclease 2 (659 aa).

The RNB domain maps to Arg-189–Asn-532. The 83-residue stretch at Asn-576–Leu-658 folds into the S1 motif domain.

Belongs to the RNR ribonuclease family. RNase II subfamily.

Its subcellular location is the cytoplasm. It catalyses the reaction Exonucleolytic cleavage in the 3'- to 5'-direction to yield nucleoside 5'-phosphates.. In terms of biological role, involved in mRNA degradation. Hydrolyzes single-stranded polyribonucleotides processively in the 3' to 5' direction. This is Exoribonuclease 2 from Glaesserella parasuis serovar 5 (strain SH0165) (Haemophilus parasuis).